We begin with the raw amino-acid sequence, 41 residues long: Large ribosomal subunit protein bL36 (41 aa).

This sequence belongs to the bacterial ribosomal protein bL36 family.

The sequence is that of Large ribosomal subunit protein bL36 from Novosphingobium aromaticivorans (strain ATCC 700278 / DSM 12444 / CCUG 56034 / CIP 105152 / NBRC 16084 / F199).